The following is a 178-amino-acid chain: MSRIGRLPITVPAGVEVKLDGSVISVKGAKGELSHTVASPIEVTQEENTLTVTRPNDERNSRSLHGLTRTLIANMIQGVTEGYEKKLEIVGTGYRVQAKGSDLEFALGYSHPVNVSAPEGITFVVEGPTKLSVAGINKQQVGEVAANIRKLRKPDPYKGKGVRYAGEVIRRKVGKAGK.

This sequence belongs to the universal ribosomal protein uL6 family. Part of the 50S ribosomal subunit.

Its function is as follows. This protein binds to the 23S rRNA, and is important in its secondary structure. It is located near the subunit interface in the base of the L7/L12 stalk, and near the tRNA binding site of the peptidyltransferase center. The polypeptide is Large ribosomal subunit protein uL6 (Paenarthrobacter aurescens (strain TC1)).